The following is a 319-amino-acid chain: 2-dehydropantoate 2-reductase (319 aa).

NADP(+)-binding positions include 10-15 and asparagine 105; that span reads GTGALG. Residue asparagine 105 participates in substrate binding. Lysine 192 functions as the Proton donor in the catalytic mechanism. Residues asparagine 196, asparagine 200, and serine 262 each coordinate substrate. Glutamate 274 contacts NADP(+).

This sequence belongs to the ketopantoate reductase family.

The protein localises to the cytoplasm. It carries out the reaction (R)-pantoate + NADP(+) = 2-dehydropantoate + NADPH + H(+). Its pathway is cofactor biosynthesis; (R)-pantothenate biosynthesis; (R)-pantoate from 3-methyl-2-oxobutanoate: step 2/2. Its function is as follows. Catalyzes the NADPH-dependent reduction of ketopantoate into pantoic acid. The polypeptide is 2-dehydropantoate 2-reductase (Nostoc sp. (strain PCC 7120 / SAG 25.82 / UTEX 2576)).